The primary structure comprises 104 residues: Small ribosomal subunit protein uS10 (104 aa).

Belongs to the universal ribosomal protein uS10 family. In terms of assembly, part of the 30S ribosomal subunit.

Functionally, involved in the binding of tRNA to the ribosomes. The polypeptide is Small ribosomal subunit protein uS10 (Nitrosococcus oceani (strain ATCC 19707 / BCRC 17464 / JCM 30415 / NCIMB 11848 / C-107)).